The chain runs to 270 residues: 3-methyl-2-oxobutanoate hydroxymethyltransferase (270 aa).

Aspartate 50 and aspartate 89 together coordinate Mg(2+). 3-methyl-2-oxobutanoate-binding positions include 50-51 (DS), aspartate 89, and lysine 118. Glutamate 120 is a Mg(2+) binding site. Glutamate 187 functions as the Proton acceptor in the catalytic mechanism.

It belongs to the PanB family. Homodecamer; pentamer of dimers. The cofactor is Mg(2+).

The protein localises to the cytoplasm. The enzyme catalyses 3-methyl-2-oxobutanoate + (6R)-5,10-methylene-5,6,7,8-tetrahydrofolate + H2O = 2-dehydropantoate + (6S)-5,6,7,8-tetrahydrofolate. It participates in cofactor biosynthesis; (R)-pantothenate biosynthesis; (R)-pantoate from 3-methyl-2-oxobutanoate: step 1/2. Functionally, catalyzes the reversible reaction in which hydroxymethyl group from 5,10-methylenetetrahydrofolate is transferred onto alpha-ketoisovalerate to form ketopantoate. This chain is 3-methyl-2-oxobutanoate hydroxymethyltransferase, found in Helicobacter pylori (strain P12).